A 195-amino-acid chain; its full sequence is ATP-dependent Clp protease proteolytic subunit (195 aa).

Ser98 (nucleophile) is an active-site residue. His123 is a catalytic residue.

The protein belongs to the peptidase S14 family. As to quaternary structure, fourteen ClpP subunits assemble into 2 heptameric rings which stack back to back to give a disk-like structure with a central cavity, resembling the structure of eukaryotic proteasomes.

The protein resides in the cytoplasm. It catalyses the reaction Hydrolysis of proteins to small peptides in the presence of ATP and magnesium. alpha-casein is the usual test substrate. In the absence of ATP, only oligopeptides shorter than five residues are hydrolyzed (such as succinyl-Leu-Tyr-|-NHMec, and Leu-Tyr-Leu-|-Tyr-Trp, in which cleavage of the -Tyr-|-Leu- and -Tyr-|-Trp bonds also occurs).. In terms of biological role, cleaves peptides in various proteins in a process that requires ATP hydrolysis. Has a chymotrypsin-like activity. Plays a major role in the degradation of misfolded proteins. This chain is ATP-dependent Clp protease proteolytic subunit, found in Alkaliphilus oremlandii (strain OhILAs) (Clostridium oremlandii (strain OhILAs)).